The following is a 64-amino-acid chain: Large ribosomal subunit protein uL29 (64 aa).

Belongs to the universal ribosomal protein uL29 family.

This chain is Large ribosomal subunit protein uL29, found in Paraburkholderia phytofirmans (strain DSM 17436 / LMG 22146 / PsJN) (Burkholderia phytofirmans).